A 138-amino-acid polypeptide reads, in one-letter code: Small ribosomal subunit protein uS11c (138 aa).

Residues 1 to 21 form a disordered region; it reads MTKAIQKIGSRRNGRIASRKN. The span at 9–21 shows a compositional bias: basic residues; sequence GSRRNGRIASRKN.

The protein belongs to the universal ribosomal protein uS11 family. Part of the 30S ribosomal subunit.

It localises to the plastid. Its subcellular location is the chloroplast. In Ceratophyllum demersum (Rigid hornwort), this protein is Small ribosomal subunit protein uS11c.